Here is a 572-residue protein sequence, read N- to C-terminus: NADP-dependent malic enzyme (572 aa).

N-acetylmethionine is present on methionine 1. Tyrosine 102 serves as the catalytic Proton donor. Arginine 155 provides a ligand contact to NADP(+). Lysine 173 functions as the Proton acceptor in the catalytic mechanism. A divalent metal cation-binding residues include glutamate 245, aspartate 246, and aspartate 269. NADP(+)-binding positions include aspartate 269 and 301–318 (GAGE…MAME). The residue at position 336 (serine 336) is a Phosphoserine. Asparagine 408 contributes to the NADP(+) binding site.

Belongs to the malic enzymes family. In terms of assembly, homotetramer. Mg(2+) serves as cofactor. It depends on Mn(2+) as a cofactor. As to expression, ubiquitous. Up-regulated by 3,5,3'-triiodo-L-thyronine in the liver, kidney and heart.

The protein localises to the cytoplasm. It carries out the reaction (S)-malate + NADP(+) = pyruvate + CO2 + NADPH. The catalysed reaction is oxaloacetate + H(+) = pyruvate + CO2. Functionally, catalyzes the oxidative decarboxylation of (S)-malate in the presence of NADP(+) and divalent metal ions, and decarboxylation of oxaloacetate. The chain is NADP-dependent malic enzyme (Me1) from Rattus norvegicus (Rat).